We begin with the raw amino-acid sequence, 425 residues long: UDP-N-acetylglucosamine 1-carboxyvinyltransferase (425 aa).

Residue 22-23 (KN) participates in phosphoenolpyruvate binding. Arginine 93 is a UDP-N-acetyl-alpha-D-glucosamine binding site. Residue cysteine 117 is the Proton donor of the active site. 2-(S-cysteinyl)pyruvic acid O-phosphothioketal is present on cysteine 117. UDP-N-acetyl-alpha-D-glucosamine-binding positions include 122–126 (RPIDL), aspartate 307, and valine 329.

This sequence belongs to the EPSP synthase family. MurA subfamily.

The protein resides in the cytoplasm. The enzyme catalyses phosphoenolpyruvate + UDP-N-acetyl-alpha-D-glucosamine = UDP-N-acetyl-3-O-(1-carboxyvinyl)-alpha-D-glucosamine + phosphate. The protein operates within cell wall biogenesis; peptidoglycan biosynthesis. In terms of biological role, cell wall formation. Adds enolpyruvyl to UDP-N-acetylglucosamine. The polypeptide is UDP-N-acetylglucosamine 1-carboxyvinyltransferase (Prosthecochloris aestuarii (strain DSM 271 / SK 413)).